We begin with the raw amino-acid sequence, 213 residues long: Uridine kinase (213 aa).

ATP is bound at residue 14 to 21 (GASASGKS).

It belongs to the uridine kinase family.

The protein localises to the cytoplasm. It catalyses the reaction uridine + ATP = UMP + ADP + H(+). The enzyme catalyses cytidine + ATP = CMP + ADP + H(+). It participates in pyrimidine metabolism; CTP biosynthesis via salvage pathway; CTP from cytidine: step 1/3. The protein operates within pyrimidine metabolism; UMP biosynthesis via salvage pathway; UMP from uridine: step 1/1. This chain is Uridine kinase, found in Vibrio atlanticus (strain LGP32) (Vibrio splendidus (strain Mel32)).